The chain runs to 210 residues: Probable peroxygenase 7 (210 aa).

A disordered region spans residues 1-24 (MSHQTVALASKAKSPKPKRGKLDK). The EF-hand domain occupies 25 to 60 (EKMTALEKHVSFFDRNKDGTVYPWETYQGFRALGTG). Position 33 (histidine 33) interacts with heme. Residues aspartate 38, asparagine 40, aspartate 42, threonine 44, and glutamate 49 each coordinate Ca(2+). Positions 81–90 (PGKGFSPLFP) match the Proline-knot motif. Phosphoserine is present on serine 188.

Belongs to the caleosin family. As to quaternary structure, homodimer. Heme b serves as cofactor. Ca(2+) is required as a cofactor. Expressed in pollen coat.

It is found in the secreted. The enzyme catalyses RH + ROOH = ROH + ROH.. In terms of biological role, probable calcium-binding peroxygenase. May be involved in pollination. This is Probable peroxygenase 7 (PXG7) from Arabidopsis thaliana (Mouse-ear cress).